The sequence spans 424 residues: Serine hydroxymethyltransferase 1 (424 aa).

(6S)-5,6,7,8-tetrahydrofolate-binding positions include Leu-125 and 129–131 (GHL). Lys-234 carries the post-translational modification N6-(pyridoxal phosphate)lysine.

The protein belongs to the SHMT family. In terms of assembly, homodimer. It depends on pyridoxal 5'-phosphate as a cofactor.

It localises to the cytoplasm. The catalysed reaction is (6R)-5,10-methylene-5,6,7,8-tetrahydrofolate + glycine + H2O = (6S)-5,6,7,8-tetrahydrofolate + L-serine. It participates in one-carbon metabolism; tetrahydrofolate interconversion. Its pathway is amino-acid biosynthesis; glycine biosynthesis; glycine from L-serine: step 1/1. Functionally, catalyzes the reversible interconversion of serine and glycine with tetrahydrofolate (THF) serving as the one-carbon carrier. This reaction serves as the major source of one-carbon groups required for the biosynthesis of purines, thymidylate, methionine, and other important biomolecules. Also exhibits THF-independent aldolase activity toward beta-hydroxyamino acids, producing glycine and aldehydes, via a retro-aldol mechanism. The polypeptide is Serine hydroxymethyltransferase 1 (Burkholderia lata (strain ATCC 17760 / DSM 23089 / LMG 22485 / NCIMB 9086 / R18194 / 383)).